We begin with the raw amino-acid sequence, 294 residues long: uncharacterized protein (294 aa).

This sequence belongs to the glycosyltransferase 2 family. WaaE/KdtX subfamily.

This is an uncharacterized protein from Rickettsia bellii (strain RML369-C).